Consider the following 260-residue polypeptide: UPF0246 protein Bmul_1054/BMULJ_02209 (260 aa).

Belongs to the UPF0246 family.

This Burkholderia multivorans (strain ATCC 17616 / 249) protein is UPF0246 protein Bmul_1054/BMULJ_02209.